Consider the following 365-residue polypeptide: Fructose-1,6-bisphosphatase class 1 2 (365 aa).

Mg(2+) contacts are provided by Glu-100, Asp-122, Leu-124, and Asp-125. Residues Asp-125–Ser-128 and Asn-221 each bind substrate. Glu-293 contacts Mg(2+).

Belongs to the FBPase class 1 family. As to quaternary structure, homotetramer. Requires Mg(2+) as cofactor.

It is found in the cytoplasm. The catalysed reaction is beta-D-fructose 1,6-bisphosphate + H2O = beta-D-fructose 6-phosphate + phosphate. Its pathway is carbohydrate biosynthesis; gluconeogenesis. The protein is Fructose-1,6-bisphosphatase class 1 2 of Cupriavidus metallidurans (strain ATCC 43123 / DSM 2839 / NBRC 102507 / CH34) (Ralstonia metallidurans).